The following is a 151-amino-acid chain: UPF0178 protein YaiI (151 aa).

The protein belongs to the UPF0178 family.

This Salmonella paratyphi B (strain ATCC BAA-1250 / SPB7) protein is UPF0178 protein YaiI.